The chain runs to 128 residues: Disintegrin EO4A (128 aa).

The signal sequence occupies residues 1–20 (MIPVLLVTICLAVFPFQGSS). Residues 21–47 (IILESGNINDYEIVYPKKVNVLPTGAM) constitute a propeptide that is removed on maturation. Positions 26–112 (GNINDYEIVY…DCPRNPYKGK (87 aa)) constitute a Disintegrin domain. Disulfide bonds link Cys53–Cys76, Cys67–Cys73, Cys72–Cys97, and Cys85–Cys104. Positions 89–91 (RGD) match the Cell attachment site motif. Positions 115-128 (PMKWPAAAKGSVLM) are excised as a propeptide.

Belongs to the disintegrin family. Dimeric disintegrin subfamily. Heterodimer with EO5B; disulfide-linked. In terms of tissue distribution, expressed by the venom gland.

The protein resides in the secreted. In terms of biological role, poor inhibitor of platelet aggregation. The disintegrin inhibits the adhesion of cells expressing the RGD-dependent integrin alpha-5/beta-1 (ITGA5/ITGB1) to immobilized fibronectin. Inhibition on alpha-2b/beta-3 (ITGA2B/ITGB3) is low. The chain is Disintegrin EO4A from Echis ocellatus (Ocellated saw-scaled viper).